The sequence spans 141 residues: Large ribosomal subunit protein bL17 (141 aa).

This sequence belongs to the bacterial ribosomal protein bL17 family. In terms of assembly, part of the 50S ribosomal subunit. Contacts protein L32.

The chain is Large ribosomal subunit protein bL17 from Sinorhizobium fredii (strain NBRC 101917 / NGR234).